Here is a 565-residue protein sequence, read N- to C-terminus: Periplasmic trehalase (565 aa).

Positions 1 to 30 are cleaved as a signal peptide; that stretch reads MKSPAPSRPQKMALIPACIFLCFAALSVQA. Substrate-binding positions include Arg152, 159-160, Asn196, 205-207, 277-279, and Gly310; these read WD, RSQ, and RPE. Catalysis depends on proton donor/acceptor residues Asp312 and Glu496. Residue Glu511 coordinates substrate. The tract at residues 538–565 is disordered; it reads PCDNVPATRPTVKSATTQPSTKEAQPTP. Residues 548 to 565 show a composition bias toward polar residues; the sequence is TVKSATTQPSTKEAQPTP.

Belongs to the glycosyl hydrolase 37 family. Monomer.

The protein localises to the periplasm. It carries out the reaction alpha,alpha-trehalose + H2O = alpha-D-glucose + beta-D-glucose. Functionally, provides the cells with the ability to utilize trehalose at high osmolarity by splitting it into glucose molecules that can subsequently be taken up by the phosphotransferase-mediated uptake system. The chain is Periplasmic trehalase from Escherichia coli O139:H28 (strain E24377A / ETEC).